We begin with the raw amino-acid sequence, 675 residues long: UvrABC system protein B (675 aa).

The 386-residue stretch at 32-417 (EGLSDGLAYQ…EHAGQVVEQV (386 aa)) folds into the Helicase ATP-binding domain. 45–52 (GVTGSGKT) contributes to the ATP binding site. A Beta-hairpin motif is present at residues 98–121 (YYDYYQPEAYVPSRDLFIEKDSAI). The region spanning 436 to 602 (QVDDLMSEIN…QIKKQVKDII (167 aa)) is the Helicase C-terminal domain. The UVR domain occupies 634-669 (IKEIAKLEKAMQQAARDLQFEEAAVLRDRIRDIKEN).

The protein belongs to the UvrB family. In terms of assembly, forms a heterotetramer with UvrA during the search for lesions. Interacts with UvrC in an incision complex.

The protein resides in the cytoplasm. In terms of biological role, the UvrABC repair system catalyzes the recognition and processing of DNA lesions. A damage recognition complex composed of 2 UvrA and 2 UvrB subunits scans DNA for abnormalities. Upon binding of the UvrA(2)B(2) complex to a putative damaged site, the DNA wraps around one UvrB monomer. DNA wrap is dependent on ATP binding by UvrB and probably causes local melting of the DNA helix, facilitating insertion of UvrB beta-hairpin between the DNA strands. Then UvrB probes one DNA strand for the presence of a lesion. If a lesion is found the UvrA subunits dissociate and the UvrB-DNA preincision complex is formed. This complex is subsequently bound by UvrC and the second UvrB is released. If no lesion is found, the DNA wraps around the other UvrB subunit that will check the other stand for damage. This Neisseria meningitidis serogroup B (strain ATCC BAA-335 / MC58) protein is UvrABC system protein B.